We begin with the raw amino-acid sequence, 1163 residues long: Rho GTPase-activating protein 45 (1163 aa).

The tract at residues 1-99 (MFSRKKRELM…KRPTSLSRHA (99 aa)) is disordered. Residues serine 23 and serine 25 each carry the phosphoserine modification. Residues 55–65 (LPKELPRKDGA) show a composition bias toward basic and acidic residues. Serine 100, serine 120, and serine 126 each carry phosphoserine. Disordered regions lie at residues 118–137 (HRSP…GTGP), 262–282 (PPGD…EGTP), and 454–475 (EEEQ…LDKR). An F-BAR domain is found at 296 to 566 (EEVDVLLQRC…SSKLYDPGQQ (271 aa)). A coiled-coil region spans residues 403–526 (EHEKRRKEIK…QIQEVIRQSD (124 aa)). Positions 458–470 (AGTAPGAGSTATK) are enriched in low complexity. Serine 596, serine 605, and serine 619 each carry phosphoserine. Residues 610 to 695 (DVAGPEAAGS…VDPEGGAGAS (86 aa)) are disordered. The segment covering 633–644 (KGHRAGRGHQVH) has biased composition (basic residues). Serine 646 bears the Phosphoserine mark. A compositionally biased stretch (low complexity) spans 673 to 682 (TSSSGTMSST). Residues 729-774 (THRLRKLRTPAKCRECNSYVYFQGAECEECCLACHKKCLETLAIQC) form a Phorbol-ester/DAG-type zinc finger. One can recognise a Rho-GAP domain in the interval 788-1001 (QDFSHAARSA…TLIVHYGLVF (214 aa)). Serine 976, serine 1054, serine 1057, and serine 1059 each carry phosphoserine. Disordered regions lie at residues 1042–1067 (AAED…ASEL) and 1087–1163 (SEAS…PEFV). Low complexity predominate over residues 1087-1099 (SEASLEEASGSHS). Over residues 1125 to 1137 (SGFNTNQSNNVLQ) the composition is skewed to polar residues.

It is found in the cytoplasm. Its subcellular location is the cell projection. It localises to the ruffle membrane. Contains a GTPase activator for the Rho-type GTPases (RhoGAP) domain that would be able to negatively regulate the actin cytoskeleton as well as cell spreading. However, also contains N-terminally a BAR-domin which is able to play an autoinhibitory effect on this RhoGAP activity. The polypeptide is Rho GTPase-activating protein 45 (Pongo abelii (Sumatran orangutan)).